Here is a 495-residue protein sequence, read N- to C-terminus: UDP-glycosyltransferase 73C9 (495 aa).

23 to 26 (GHMI) is a UDP-alpha-D-glucose binding site. Histidine 24 (proton acceptor) is an active-site residue. Aspartate 129 acts as the Charge relay in catalysis. Residues 355-358 (WSPQ), 373-381 (HCGWNSTLE), and 397-398 (DQ) contribute to the UDP-alpha-D-glucose site.

This sequence belongs to the UDP-glycosyltransferase family.

Its function is as follows. Possesses very weak glucosyltransferase activity toward 2,4,5-trichlorophenol (TCP), when assayed with high concentrations of TCP. This is UDP-glycosyltransferase 73C9 from Barbarea vulgaris (Yellow rocket).